We begin with the raw amino-acid sequence, 243 residues long: Undecaprenyl-phosphate mannosyltransferase (243 aa).

It belongs to the glycosyltransferase 2 family.

It carries out the reaction di-trans,octa-cis-undecaprenyl phosphate + GDP-alpha-D-mannose = D-mannosyl di-trans,octa-cis-undecaprenyl phosphate + GDP. In terms of biological role, catalyzes the transfer of mannose from GDP-mannose to D-mannosyl-1-phosphoundecaprenol. This Micrococcus luteus (strain ATCC 4698 / DSM 20030 / JCM 1464 / CCM 169 / CCUG 5858 / IAM 1056 / NBRC 3333 / NCIMB 9278 / NCTC 2665 / VKM Ac-2230) (Micrococcus lysodeikticus) protein is Undecaprenyl-phosphate mannosyltransferase.